Here is a 580-residue protein sequence, read N- to C-terminus: Putative Xaa-Pro dipeptidyl-peptidase (580 aa).

Active-site charge relay system residues include S207, D319, and H350.

It belongs to the peptidase S15 family.

It catalyses the reaction Hydrolyzes Xaa-Pro-|- bonds to release unblocked, N-terminal dipeptides from substrates including Ala-Pro-|-p-nitroanilide and (sequentially) Tyr-Pro-|-Phe-Pro-|-Gly-Pro-|-Ile.. The polypeptide is Putative Xaa-Pro dipeptidyl-peptidase (Bacillus cereus (strain ATCC 14579 / DSM 31 / CCUG 7414 / JCM 2152 / NBRC 15305 / NCIMB 9373 / NCTC 2599 / NRRL B-3711)).